The chain runs to 213 residues: Phosphoribosyl-dephospho-CoA transferase (213 aa).

Residues D135 and D137 contribute to the active site.

Belongs to the MdcG family.

It catalyses the reaction apo-[malonate decarboxylase ACP] + 2'-(5''-triphospho-alpha-D-ribosyl)-3'-dephospho-CoA = holo-[malonate decarboxylase ACP] + diphosphate. In terms of biological role, transfers 2'-(5-triphosphoribosyl)-3'-dephosphocoenzyme-A to the apo-[acyl-carrier-protein] of the malonate decarboxylase to yield holo-[acyl-carrier-protein]. The polypeptide is Phosphoribosyl-dephospho-CoA transferase (Xanthomonas campestris pv. campestris (strain ATCC 33913 / DSM 3586 / NCPPB 528 / LMG 568 / P 25)).